The sequence spans 92 residues: Beta-2-microglobulin (92 aa).

Positions 2–89 constitute an Ig-like C1-type domain; sequence PQIQVYSRHP…NHVSMDKPMT (88 aa). A disulfide bridge links cysteine 22 with cysteine 77.

The protein belongs to the beta-2-microglobulin family. Heterodimer of an alpha chain and a beta chain. Beta-2-microglobulin is the beta-chain of major histocompatibility complex class I molecules.

It is found in the secreted. Its function is as follows. Component of the class I major histocompatibility complex (MHC). Involved in the presentation of peptide antigens to the immune system. The sequence is that of Beta-2-microglobulin (B2m) from Mus spretus (Western Mediterranean mouse).